We begin with the raw amino-acid sequence, 289 residues long: Protein charybde (289 aa).

Residues Thr-119 to Thr-142 are disordered.

It belongs to the DDIT4 family.

It localises to the cytoplasm. Functionally, inhibits cell growth by regulating the Tor pathway upstream of the Tsc1-Tsc2 complex and downstream of Akt1. Acts as a cell death activator during head development. This is Protein charybde (chrb) from Drosophila pseudoobscura pseudoobscura (Fruit fly).